The primary structure comprises 276 residues: Diaminopimelate epimerase (276 aa).

Substrate contacts are provided by Asn13, Gln46, and Asn66. Catalysis depends on Cys75, which acts as the Proton donor. Substrate contacts are provided by residues 76–77, Asn159, Asn192, and 210–211; these read GN and ER. Residue Cys219 is the Proton acceptor of the active site. 220–221 is a substrate binding site; the sequence is GS.

Belongs to the diaminopimelate epimerase family. As to quaternary structure, homodimer.

It localises to the cytoplasm. It carries out the reaction (2S,6S)-2,6-diaminopimelate = meso-2,6-diaminopimelate. It functions in the pathway amino-acid biosynthesis; L-lysine biosynthesis via DAP pathway; DL-2,6-diaminopimelate from LL-2,6-diaminopimelate: step 1/1. Catalyzes the stereoinversion of LL-2,6-diaminopimelate (L,L-DAP) to meso-diaminopimelate (meso-DAP), a precursor of L-lysine and an essential component of the bacterial peptidoglycan. The polypeptide is Diaminopimelate epimerase (Aliivibrio fischeri (strain ATCC 700601 / ES114) (Vibrio fischeri)).